We begin with the raw amino-acid sequence, 568 residues long: MGGIMAPKDIMTNTHAKSILNSMNSLRKSNTLCDVTLRVEQKDFPAHRIVLAACSDYFCAMFTSELSEKGKPYVDIQGLTASTMEILLDFVYTETVHVTVENVQELLPAACLLQLKGVKQACCEFLESQLDPSNCLGIRDFAETHNCVDLMQAAEVFSQKHFPEVVQHEEFILLSQGEVEKLIKCDEIQVDSEEPVFEAVINWVKHAKKEREESLPDLLQYVRMPLLTPRYITDVIDAEPFIRCSLQCRDLVDEAKKFHLRPELRSQMQGPRTRARLGDNEVLLVVGGFGSQQSPIDVVEKYDPKTQEWSFLPSITRKRRYVASVSLHDRIYVIGGYDGRSRLSSVECLDYTADEDGVWYSVAPMNVRRGLAGATTLGDMIYVSGGFDGSRRHTSMERYDPNIDQWSMLGDMQTAREGAGLVVASGIIYCLGGYDGLNILNSVEKYDPHTGHWTNVTPMATKRSGAGVALLNDHIYVVGGFDGTAHLSSVEAYNIRTDSWTTVTSMTTPRCYVGATVLRGRLYAIAGYDGNSLLSSIECYDPIIDSWEVVASMGTQRCDAGVCVLREK.

The BTB domain occupies 33–100; that stretch reads CDVTLRVEQK…VYTETVHVTV (68 aa). One can recognise a BACK domain in the interval 135 to 236; that stretch reads CLGIRDFAET…LTPRYITDVI (102 aa). 6 Kelch repeats span residues 282–329, 331–379, 380–426, 427–473, 475–520, and 522–567; these read VLLV…SLHD, IYVI…TLGD, MIYV…VASG, IIYC…LLND, IYVV…VLRG, and LYAI…VLRE. Positions 405–568 are interaction with DVL3; it reads QWSMLGDMQT…DAGVCVLREK (164 aa).

As to quaternary structure, component of the BCR(KLHL12) E3 ubiquitin ligase complex, at least composed of CUL3 and KLHL12 and RBX1. This complex interacts with DVL3 upon activation of the Wnt signaling pathway by WNT3A. Interacts with DRD4, KLHL2 and SEC31A. Interacts with PEF1 and PDCD6/ALG-2; interaction takes place in response to cytosolic calcium increase and leads to bridge together the BCR(KLHL12) complex and SEC31 (SEC31A or SEC31B). In terms of processing, ubiquitinated by the SCF(FBXL17) complex, leading to its degradation by the proteasome: ubiquitination by the SCF(FBXL17) complex takes place when aberrant BTB domain dimers are formed.

It localises to the cytoplasmic vesicle. The protein resides in the COPII-coated vesicle. Its pathway is protein modification; protein ubiquitination. Functionally, substrate-specific adapter of a BCR (BTB-CUL3-RBX1) E3 ubiquitin ligase complex that acts as a negative regulator of Wnt signaling pathway and ER-Golgi transport. The BCR(KLHL12) complex is involved in ER-Golgi transport by regulating the size of COPII coats, thereby playing a key role in collagen export, which is required for embryonic stem (ES) cells division: BCR(KLHL12) acts by mediating monoubiquitination of SEC31 (SEC31A or SEC31B). The BCR(KLHL12) complex is also involved in neural crest specification: in response to cytosolic calcium increase, interacts with the heterodimer formed with PEF1 and PDCD6/ALG-2, leading to bridge together the BCR(KLHL12) complex and SEC31 (SEC31A or SEC31B), promoting monoubiquitination of SEC31 and subsequent collagen export. As part of the BCR(KLHL12) complex, also acts as a negative regulator of the Wnt signaling pathway by mediating ubiquitination and subsequent proteolysis of DVL3. The BCR(KLHL12) complex also mediates polyubiquitination of DRD4 and PEF1, without leading to degradation of these proteins. The chain is Kelch-like protein 12 (Klhl12) from Rattus norvegicus (Rat).